We begin with the raw amino-acid sequence, 202 residues long: Protein lin-28 homolog A (202 aa).

Disordered stretches follow at residues 1-33 (MPPA…GSFH) and 100-128 (SLQV…RSKG). Over residues 18 to 29 (EEEEAASSEEDS) the composition is skewed to acidic residues. The CSD domain occupies 33-106 (HGSGVCKWFN…GLESLQVTGP (74 aa)). Positions 107 to 130 (GGAPCVGSEKKPKGTQKRRSKGDR) are flexible linker. CCHC-type zinc fingers lie at residues 129–146 (DRCF…ECQL) and 151–168 (KKCH…NCPI). Zn(2+) is bound by residues C131, C134, H139, C144, C153, C156, H161, and C166. The tract at residues 170–202 (AQQLSPGSQGKSTTSTGEEEDMSHTPLLPESTD) is disordered. The span at 171 to 185 (QQLSPGSQGKSTTST) shows a compositional bias: polar residues. S174 carries the phosphoserine modification.

Belongs to the lin-28 family. Monomer.

Its subcellular location is the cytoplasm. The protein resides in the rough endoplasmic reticulum. It localises to the P-body. The protein localises to the stress granule. It is found in the nucleus. Its subcellular location is the nucleolus. In terms of biological role, RNA-binding protein that inhibits processing of pre-let-7 miRNAs and regulates translation of mRNAs that control developmental timing, pluripotency and metabolism. Seems to recognize a common structural G-quartet (G4) feature in its miRNA and mRNA targets. 'Translational enhancer' that drives specific mRNAs to polysomes and increases the efficiency of protein synthesis. Its association with the translational machinery and target mRNAs results in an increased number of initiation events per molecule of mRNA and, indirectly, in mRNA stabilization. Suppressor of microRNA (miRNA) biogenesis, including that of let-7. Binds specific target miRNA precursors (pre-miRNAs), recognizing an 5'-GGAG-3' motif found in their terminal loop, and recruits uridylyltransferase. This results in the terminal uridylation of target pre-miRNAs. Uridylated pre-miRNAs fail to be processed by Dicer and undergo degradation. Localized to the periendoplasmic reticulum area, binds to a large number of spliced mRNAs and inhibits the translation of mRNAs destined for the ER, reducing the synthesis of transmembrane proteins, ER or Golgi lumen proteins, and secretory proteins. Binds to and enhances the translation of mRNAs for several metabolic enzymes, increasing glycolysis and oxidative phosphorylation. Which, with the let-7 repression may enhance tissue repair in adult tissue. This chain is Protein lin-28 homolog A (lin28a), found in Danio rerio (Zebrafish).